The chain runs to 374 residues: Carbamoyl phosphate synthase small chain (374 aa).

Residues 1–186 (MTEPAILVLE…DRNEWKRAAP (186 aa)) form a CPSase region. L-glutamine contacts are provided by Ser47, Gly237, and Gly239. The region spanning 189–374 (KVVAYDYGVK…RFITMMAAQS (186 aa)) is the Glutamine amidotransferase type-1 domain. Cys265 functions as the Nucleophile in the catalytic mechanism. L-glutamine is bound by residues Leu266, Gln269, Asn307, Gly309, and Phe310. Active-site residues include His349 and Glu351.

It belongs to the CarA family. In terms of assembly, composed of two chains; the small (or glutamine) chain promotes the hydrolysis of glutamine to ammonia, which is used by the large (or ammonia) chain to synthesize carbamoyl phosphate. Tetramer of heterodimers (alpha,beta)4.

It carries out the reaction hydrogencarbonate + L-glutamine + 2 ATP + H2O = carbamoyl phosphate + L-glutamate + 2 ADP + phosphate + 2 H(+). It catalyses the reaction L-glutamine + H2O = L-glutamate + NH4(+). The protein operates within amino-acid biosynthesis; L-arginine biosynthesis; carbamoyl phosphate from bicarbonate: step 1/1. It participates in pyrimidine metabolism; UMP biosynthesis via de novo pathway; (S)-dihydroorotate from bicarbonate: step 1/3. In terms of biological role, small subunit of the glutamine-dependent carbamoyl phosphate synthetase (CPSase). CPSase catalyzes the formation of carbamoyl phosphate from the ammonia moiety of glutamine, carbonate, and phosphate donated by ATP, constituting the first step of 2 biosynthetic pathways, one leading to arginine and/or urea and the other to pyrimidine nucleotides. The small subunit (glutamine amidotransferase) binds and cleaves glutamine to supply the large subunit with the substrate ammonia. This Xylella fastidiosa (strain 9a5c) protein is Carbamoyl phosphate synthase small chain.